We begin with the raw amino-acid sequence, 269 residues long: Membrane protein insertase YidC 1 (269 aa).

Positions 1–20 (MKKKFSLIAMAGAALLLLTA) are cleaved as a signal peptide. Residue Cys-21 is the site of N-palmitoyl cysteine attachment. Cys-21 carries S-diacylglycerol cysteine lipidation. The next 4 helical transmembrane spans lie at 45 to 65 (IRFL…TIVI), 124 to 144 (YMGC…YQAL), 165 to 185 (PTFI…YLMM), and 203 to 223 (PIFI…YWVI).

This sequence belongs to the OXA1/ALB3/YidC family. Type 2 subfamily.

Its subcellular location is the cell membrane. In terms of biological role, required for the insertion and/or proper folding and/or complex formation of integral membrane proteins into the membrane. Involved in integration of membrane proteins that insert both dependently and independently of the Sec translocase complex, as well as at least some lipoproteins. The chain is Membrane protein insertase YidC 1 from Lactococcus lactis subsp. lactis (strain IL1403) (Streptococcus lactis).